The following is a 509-amino-acid chain: Acetyl-coenzyme A carboxylase carboxyl transferase subunit beta, chloroplastic (509 aa).

The segment at 164–216 is disordered; that stretch reads HGSVCDGESHNSSEGESSSRRTHTKGVDLTIRESSNENERESSNENERKSSND. Basic and acidic residues-rich tracts occupy residues 170–182 and 193–216; these read GESHNSSEGESSS and TIRESSNENERESSNENERKSSND. Residues 226–509 enclose the CoA carboxyltransferase N-terminal domain; that stretch reads LWLQCENCYG…LNQNSNQVEC (284 aa). The Zn(2+) site is built by cysteine 230, cysteine 233, cysteine 249, and cysteine 252. The C4-type zinc finger occupies 230–252; sequence CENCYGLNYKKFLKSKMNICEQC. Residues 288–307 form a disordered region; that stretch reads FDSEGEQEQEQEQEQEEEET.

Belongs to the AccD/PCCB family. In terms of assembly, acetyl-CoA carboxylase is a heterohexamer composed of biotin carboxyl carrier protein, biotin carboxylase and 2 subunits each of ACCase subunit alpha and ACCase plastid-coded subunit beta (accD). Zn(2+) is required as a cofactor.

The protein resides in the plastid. It localises to the chloroplast stroma. It carries out the reaction N(6)-carboxybiotinyl-L-lysyl-[protein] + acetyl-CoA = N(6)-biotinyl-L-lysyl-[protein] + malonyl-CoA. Its pathway is lipid metabolism; malonyl-CoA biosynthesis; malonyl-CoA from acetyl-CoA: step 1/1. Its function is as follows. Component of the acetyl coenzyme A carboxylase (ACC) complex. Biotin carboxylase (BC) catalyzes the carboxylation of biotin on its carrier protein (BCCP) and then the CO(2) group is transferred by the transcarboxylase to acetyl-CoA to form malonyl-CoA. The polypeptide is Acetyl-coenzyme A carboxylase carboxyl transferase subunit beta, chloroplastic (Ipomoea purpurea (Common morning glory)).